The chain runs to 163 residues: Phosphopantetheine adenylyltransferase (163 aa).

A substrate-binding site is contributed by Ser-8. ATP-binding positions include 8 to 9 (SF) and His-16. Residues Lys-40, Thr-72, and Arg-86 each coordinate substrate. ATP contacts are provided by residues 87–89 (GLR), Glu-97, and 122–128 (HSFLSSS).

Belongs to the bacterial CoaD family. As to quaternary structure, homohexamer. Mg(2+) is required as a cofactor.

It localises to the cytoplasm. The enzyme catalyses (R)-4'-phosphopantetheine + ATP + H(+) = 3'-dephospho-CoA + diphosphate. The protein operates within cofactor biosynthesis; coenzyme A biosynthesis; CoA from (R)-pantothenate: step 4/5. Its function is as follows. Reversibly transfers an adenylyl group from ATP to 4'-phosphopantetheine, yielding dephospho-CoA (dPCoA) and pyrophosphate. This Parasynechococcus marenigrum (strain WH8102) protein is Phosphopantetheine adenylyltransferase.